The sequence spans 418 residues: MTLLALGINHKTAPVSLRERVSFSPDKLDQALDSLLAQPMVQGGVVLSTCNRTELYLSVEEQDNLQEALIRWLCDYHNLNEEDLRKSLYWHQDNDAVSHLMRVASGLDSLVLGEPQILGQVKKAFADSQKGHMKASELERMFQKSFSVAKRVRTETDIGASAVSVAFAACTLARQIFESLSTVTVLLVGAGETIELVARHLREHKVQKMIIANRTRERAQILADEVGAEVIALSDVDERLREADIIISSTASPLPIIGKGMVERALKSRRNQPMLLVDIAVPRDVEPEVGKLANAYLYSVDDLQSIISHNLAQRKAAAVEAETIVAQETSEFMAWLRAQSASETIREYRSQAEQVRDELTAKALAALEQGGDAQAIMQDLAWKLTNRLIHAPTKLLQQAARDGDNERLNILRDSLGLE.

Residues 49 to 52 (TCNR), serine 109, 114 to 116 (EPQ), and glutamine 120 each bind substrate. Cysteine 50 functions as the Nucleophile in the catalytic mechanism. NADP(+) is bound at residue 189–194 (GAGETI).

It belongs to the glutamyl-tRNA reductase family. As to quaternary structure, homodimer.

It catalyses the reaction (S)-4-amino-5-oxopentanoate + tRNA(Glu) + NADP(+) = L-glutamyl-tRNA(Glu) + NADPH + H(+). The protein operates within porphyrin-containing compound metabolism; protoporphyrin-IX biosynthesis; 5-aminolevulinate from L-glutamyl-tRNA(Glu): step 1/2. Catalyzes the NADPH-dependent reduction of glutamyl-tRNA(Glu) to glutamate 1-semialdehyde (GSA). This is Glutamyl-tRNA reductase from Shigella dysenteriae serotype 1 (strain Sd197).